The following is a 255-amino-acid chain: Imidazole glycerol phosphate synthase subunit HisF (255 aa).

Catalysis depends on residues Asp-11 and Asp-130.

This sequence belongs to the HisA/HisF family. In terms of assembly, heterodimer of HisH and HisF.

The protein resides in the cytoplasm. The catalysed reaction is 5-[(5-phospho-1-deoxy-D-ribulos-1-ylimino)methylamino]-1-(5-phospho-beta-D-ribosyl)imidazole-4-carboxamide + L-glutamine = D-erythro-1-(imidazol-4-yl)glycerol 3-phosphate + 5-amino-1-(5-phospho-beta-D-ribosyl)imidazole-4-carboxamide + L-glutamate + H(+). Its pathway is amino-acid biosynthesis; L-histidine biosynthesis; L-histidine from 5-phospho-alpha-D-ribose 1-diphosphate: step 5/9. IGPS catalyzes the conversion of PRFAR and glutamine to IGP, AICAR and glutamate. The HisF subunit catalyzes the cyclization activity that produces IGP and AICAR from PRFAR using the ammonia provided by the HisH subunit. This is Imidazole glycerol phosphate synthase subunit HisF from Campylobacter lari (strain RM2100 / D67 / ATCC BAA-1060).